A 208-amino-acid chain; its full sequence is Large ribosomal subunit protein uL3 (208 aa).

The disordered stretch occupies residues 116–148 (GFQGVIKRHGQSRGPMAHGSRYHRRPGSMGPVA).

Belongs to the universal ribosomal protein uL3 family. In terms of assembly, part of the 50S ribosomal subunit. Forms a cluster with proteins L14 and L19.

Its function is as follows. One of the primary rRNA binding proteins, it binds directly near the 3'-end of the 23S rRNA, where it nucleates assembly of the 50S subunit. The protein is Large ribosomal subunit protein uL3 of Streptococcus agalactiae serotype Ia (strain ATCC 27591 / A909 / CDC SS700).